Reading from the N-terminus, the 505-residue chain is 2,3-bisphosphoglycerate-independent phosphoglycerate mutase (505 aa).

Residues Asp-12 and Ser-62 each contribute to the Mn(2+) site. Ser-62 functions as the Phosphoserine intermediate in the catalytic mechanism. Substrate contacts are provided by residues His-123, 153 to 154, Arg-185, Arg-191, 257 to 260, and Lys-330; these read RD and RPDR. Positions 397, 401, 438, 439, and 456 each coordinate Mn(2+).

This sequence belongs to the BPG-independent phosphoglycerate mutase family. As to quaternary structure, monomer. Mn(2+) is required as a cofactor.

It catalyses the reaction (2R)-2-phosphoglycerate = (2R)-3-phosphoglycerate. Its pathway is carbohydrate degradation; glycolysis; pyruvate from D-glyceraldehyde 3-phosphate: step 3/5. Its function is as follows. Catalyzes the interconversion of 2-phosphoglycerate and 3-phosphoglycerate. The protein is 2,3-bisphosphoglycerate-independent phosphoglycerate mutase of Staphylococcus aureus (strain COL).